We begin with the raw amino-acid sequence, 421 residues long: Membrane-associated protein UidC (421 aa).

The first 23 residues, 1-23 (MRKIVAMAVICLTAASGLTSAYA), serve as a signal peptide directing secretion.

This sequence belongs to the outer membrane porin (Opr) (TC 1.B.25) family.

It localises to the cell outer membrane. Its function is as follows. Enhances the activity of the UidB (GusB) glucuronide transporter, on its own however it has no transport activity. Glucuronide transport does not occur in strain K12 due to a variant at position 100 of the UidB (GusB, AC P0CE44, AC P0CE45) protein. In Escherichia coli (strain K12), this protein is Membrane-associated protein UidC (uidC).